The sequence spans 85 residues: Small ribosomal subunit protein eS27 (85 aa).

The C4-type zinc finger occupies C38–C60.

This sequence belongs to the eukaryotic ribosomal protein eS27 family. It depends on Zn(2+) as a cofactor.

This chain is Small ribosomal subunit protein eS27 (rps27), found in Dictyostelium discoideum (Social amoeba).